The primary structure comprises 446 residues: Tubulin beta chain (446 aa).

Residues Gln11, Glu69, Ser138, Gly142, Thr143, Gly144, Asn204, and Asn226 each coordinate GTP. Glu69 serves as a coordination point for Mg(2+). The disordered stretch occupies residues 423–446 (QQYQDATADEEEGEYEEEPAEEEQ). A compositionally biased stretch (acidic residues) spans 429–446 (TADEEEGEYEEEPAEEEQ).

The protein belongs to the tubulin family. As to quaternary structure, dimer of alpha and beta chains. A typical microtubule is a hollow water-filled tube with an outer diameter of 25 nm and an inner diameter of 15 nM. Alpha-beta heterodimers associate head-to-tail to form protofilaments running lengthwise along the microtubule wall with the beta-tubulin subunit facing the microtubule plus end conferring a structural polarity. Microtubules usually have 13 protofilaments but different protofilament numbers can be found in some organisms and specialized cells. Mg(2+) serves as cofactor.

It is found in the cytoplasm. Its subcellular location is the cytoskeleton. In terms of biological role, tubulin is the major constituent of microtubules, a cylinder consisting of laterally associated linear protofilaments composed of alpha- and beta-tubulin heterodimers. Microtubules grow by the addition of GTP-tubulin dimers to the microtubule end, where a stabilizing cap forms. Below the cap, tubulin dimers are in GDP-bound state, owing to GTPase activity of alpha-tubulin. The polypeptide is Tubulin beta chain (Pleurotus sajor-caju (Oyster mushroom)).